The chain runs to 263 residues: 4-hydroxy-tetrahydrodipicolinate reductase (263 aa).

Residue 10–15 (GASGKM) coordinates NAD(+). Residue Arg38 participates in NADP(+) binding. NAD(+) is bound by residues 97 to 99 (GTT) and 123 to 126 (APNF). His153 serves as the catalytic Proton donor/acceptor. His154 provides a ligand contact to (S)-2,3,4,5-tetrahydrodipicolinate. The active-site Proton donor is Lys157. 163-164 (GT) provides a ligand contact to (S)-2,3,4,5-tetrahydrodipicolinate.

Belongs to the DapB family.

The protein localises to the cytoplasm. It carries out the reaction (S)-2,3,4,5-tetrahydrodipicolinate + NAD(+) + H2O = (2S,4S)-4-hydroxy-2,3,4,5-tetrahydrodipicolinate + NADH + H(+). The catalysed reaction is (S)-2,3,4,5-tetrahydrodipicolinate + NADP(+) + H2O = (2S,4S)-4-hydroxy-2,3,4,5-tetrahydrodipicolinate + NADPH + H(+). Its pathway is amino-acid biosynthesis; L-lysine biosynthesis via DAP pathway; (S)-tetrahydrodipicolinate from L-aspartate: step 4/4. Functionally, catalyzes the conversion of 4-hydroxy-tetrahydrodipicolinate (HTPA) to tetrahydrodipicolinate. This Dehalococcoides mccartyi (strain ATCC BAA-2100 / JCM 16839 / KCTC 5957 / BAV1) protein is 4-hydroxy-tetrahydrodipicolinate reductase.